The following is a 393-amino-acid chain: Acetylornithine aminotransferase 1 (393 aa).

R131 serves as a coordination point for N(2)-acetyl-L-ornithine. Pyridoxal 5'-phosphate is bound at residue 215 to 218 (DEVQ). K244 bears the N6-(pyridoxal phosphate)lysine mark. T272 contacts N(2)-acetyl-L-ornithine. T273 lines the pyridoxal 5'-phosphate pocket.

The protein belongs to the class-III pyridoxal-phosphate-dependent aminotransferase family. ArgD subfamily. In terms of assembly, homodimer. Requires pyridoxal 5'-phosphate as cofactor.

It is found in the cytoplasm. It catalyses the reaction N(2)-acetyl-L-ornithine + 2-oxoglutarate = N-acetyl-L-glutamate 5-semialdehyde + L-glutamate. Its pathway is amino-acid biosynthesis; L-arginine biosynthesis; N(2)-acetyl-L-ornithine from L-glutamate: step 4/4. In Bordetella bronchiseptica (strain ATCC BAA-588 / NCTC 13252 / RB50) (Alcaligenes bronchisepticus), this protein is Acetylornithine aminotransferase 1.